Consider the following 187-residue polypeptide: Threonylcarbamoyl-AMP synthase (187 aa).

The region spanning 3–187 (QVTPSQISGI…IQTGHIFRQG (185 aa)) is the YrdC-like domain.

This sequence belongs to the SUA5 family. TsaC subfamily.

It localises to the cytoplasm. It catalyses the reaction L-threonine + hydrogencarbonate + ATP = L-threonylcarbamoyladenylate + diphosphate + H2O. Functionally, required for the formation of a threonylcarbamoyl group on adenosine at position 37 (t(6)A37) in tRNAs that read codons beginning with adenine. Catalyzes the conversion of L-threonine, HCO(3)(-)/CO(2) and ATP to give threonylcarbamoyl-AMP (TC-AMP) as the acyladenylate intermediate, with the release of diphosphate. The protein is Threonylcarbamoyl-AMP synthase of Shewanella amazonensis (strain ATCC BAA-1098 / SB2B).